Here is a 435-residue protein sequence, read N- to C-terminus: UDP-N-acetylmuramate--L-alanine ligase (435 aa).

Position 108–114 (108–114 (GSHGKTS)) interacts with ATP.

Belongs to the MurCDEF family.

The protein localises to the cytoplasm. The catalysed reaction is UDP-N-acetyl-alpha-D-muramate + L-alanine + ATP = UDP-N-acetyl-alpha-D-muramoyl-L-alanine + ADP + phosphate + H(+). It functions in the pathway cell wall biogenesis; peptidoglycan biosynthesis. Functionally, cell wall formation. The chain is UDP-N-acetylmuramate--L-alanine ligase from Shouchella clausii (strain KSM-K16) (Alkalihalobacillus clausii).